Here is a 64-residue protein sequence, read N- to C-terminus: Putative antitoxin VapB4 (64 aa).

Belongs to the UPF0165 family.

Functionally, possibly the antitoxin component of a type II toxin-antitoxin (TA) system. Its cognate toxin is VapC4 (Potential). The sequence is that of Putative antitoxin VapB4 (vapB4) from Archaeoglobus fulgidus (strain ATCC 49558 / DSM 4304 / JCM 9628 / NBRC 100126 / VC-16).